The following is a 311-amino-acid chain: AT-hook motif nuclear-localized protein 27 (311 aa).

Residues 40–105 (HHHQHQQHQQ…KNKAKPPIIV (66 aa)) are disordered. The span at 55 to 75 (DDSRESDHSNKDHHQQGRPDS) shows a compositional bias: basic and acidic residues. Residues 86–98 (KRPRGRPPGSKNK) constitute a DNA-binding region (a.T hook). Positions 110–258 (PNALRSHVLE…EEGGGGGGGG (149 aa)) constitute a PPC domain. The required for the binding to non-AHL interactors stretch occupies residues 178-183 (GRFEIL). Positions 246 to 311 (EEEEEGGGGG…GAGTPSRPPF (66 aa)) are disordered. A compositionally biased stretch (gly residues) spans 252–262 (GGGGGGGGGGP). Low complexity predominate over residues 263–277 (PQMQQAPSASPPSGV). A compositionally biased stretch (gly residues) spans 278–292 (TGQGQLGGNVGGYGF).

In terms of assembly, homodimer. Interacts with AHL12, AHL25, AHL29, TCP4, TCP13, EF114, ATAF2/NAC081, histone H2B.1, histone H3.3 and histone H4. As to expression, expressed in the hypocotyl and the vascular tissue of seedling.

It is found in the nucleus. In terms of biological role, transcription factor that specifically binds AT-rich DNA sequences related to the nuclear matrix attachment regions (MARs). Negatively regulates plant innate immunity (PTI) to pathogens through the down-regulation of the PAMP-triggered FRK1 expression. Acts redundantly with AHL18, AHL22 and AHL29 in the regulation of flowering and regulation of the hypocotyl elongation. Acts as a chromatin remodeling factor that negatively regulates the leaf senescence. Acts redundantly with AHL29/SOB3 to modulate hypocotyl growth inhibition in response to light. This Arabidopsis thaliana (Mouse-ear cress) protein is AT-hook motif nuclear-localized protein 27.